The chain runs to 356 residues: MTRPIQASLDLQALKQNLSIVRQAAPYARVWSVVKANAYGHGIERIWSALGATDGFALLNLEEAITLRERGWKGPILMLEGFFHAQDLEIYDQHRLTTCVHSNWQLKALQNARLKAPLDIYLKVNSGMNRLGFQPDRVLTVWQQLRAMANVGEMTLMSHFAEAEHPDGISSAMARIEQAAEGLECRRSLANSAATLWHQEAHFDWVRPGIILYGASPSGQWRDIANTGLRPVMTLSSEIIGVQTLKAGERVGYGGRYTARDEQRIGIVAAGYADGYPRHAPTGTPVLVDGVLTMTVGTVSMDMLAVDLTPCPQAGIGTPVELWGKEIKIDDVAAAAGTVGYELMCALALRVPVVTV.

Residue lysine 35 is the Proton acceptor; specific for D-alanine of the active site. N6-(pyridoxal phosphate)lysine is present on lysine 35. Residue arginine 130 coordinates substrate. The active-site Proton acceptor; specific for L-alanine is tyrosine 253. Methionine 301 lines the substrate pocket.

It belongs to the alanine racemase family. Pyridoxal 5'-phosphate is required as a cofactor.

It carries out the reaction L-alanine = D-alanine. Functionally, isomerizes L-alanine to D-alanine which is then oxidized to pyruvate by DadA. The protein is Alanine racemase, catabolic (dadX) of Escherichia coli O6:H1 (strain CFT073 / ATCC 700928 / UPEC).